Consider the following 697-residue polypeptide: MFS antiporter QDR3 (697 aa).

At 1–141 (MSHSPNLSPQ…ARDYPNKIKY (141 aa)) the chain is on the cytoplasmic side. Residues 38–109 (HPIGHHGREQ…KPTSTSIKTN (72 aa)) are disordered. Low complexity-rich tracts occupy residues 53 to 69 (NTTK…HTTT) and 85 to 99 (DLSS…YLSQ). Residues 142–162 (LIVFIIAFASLAGPFGTSVML) form a helical membrane-spanning segment. The Extracellular portion of the chain corresponds to 163–180 (PAIDDIVNDLNTNVSTVN). 2 N-linked (GlcNAc...) asparagine glycosylation sites follow: asparagine 175 and asparagine 180. The chain crosses the membrane as a helical span at residues 181–201 (VSVGIYLLSLGIFPLWWSSFS). Over 202-215 (ERFGRRSVYMVSFT) the chain is Cytoplasmic. The helical transmembrane segment at 216 to 236 (LFVAFSIGTALSPNIAALIVL) threads the bilayer. Topologically, residues 237 to 240 (RVLQ) are extracellular. A helical membrane pass occupies residues 241–261 (GGSSASVQAVGAGTIADLFIP). Over 262 to 268 (QERGQAM) the chain is Cytoplasmic. The chain crosses the membrane as a helical span at residues 269–289 (GLYYLGPLAGPFLAPILGGAV). The Extracellular portion of the chain corresponds to 290–296 (SQAWGWR). A helical transmembrane segment spans residues 297 to 317 (ATQWLLMIISACSFVLITFFL). The Cytoplasmic segment spans residues 318 to 485 (PETLRRVDTI…SIILLKHPPV (168 aa)). The interval 338–367 (DNNGSQNEKIHDDFAGADNSSVHDIDGNPI) is disordered. The chain crosses the membrane as a helical span at residues 486 to 506 (VLVISFSAISFAAIYFFNMAI). The Extracellular segment spans residues 507-519 (SYEYARSPYNFSS). Residue asparagine 516 is glycosylated (N-linked (GlcNAc...) asparagine). The chain crosses the membrane as a helical span at residues 520–540 (VILGLMYIPNSVTYFMASIIG). At 541 to 565 (GKWNDRLLNRYAQKHGELVPESRLS) the chain is on the cytoplasmic side. Residues 566–586 (WNIVVAIILYPMACLIFGWTI) form a helical membrane-spanning segment. Topologically, residues 587 to 590 (KYRE) are extracellular. Residues 591–611 (FWVIPLIGTALFGFASMLVIG) form a helical membrane-spanning segment. The Cytoplasmic segment spans residues 612-626 (ATVTYLVDSLPGKGA). Residues 627 to 647 (TGVALNNLIRQILAAIATFIV) traverse the membrane as a helical segment. At 648-653 (EPLLRA) the chain is on the extracellular side. Residues 654-674 (IGAGVLFSIIAGILLVSSLVL) form a helical membrane-spanning segment. Over 675–697 (LYLKKRGAFFREHYDVMDLYAKL) the chain is Cytoplasmic.

The protein belongs to the major facilitator superfamily. CAR1 family.

Its subcellular location is the cell membrane. MFS antiporter that does not display functional linkage as drug transporter and performs functions that significantly affect biofilm development and virulence. No substrate for transport has been identified yet, but plays an important role in the growth in the host. The chain is MFS antiporter QDR3 (QDR3) from Candida albicans (strain SC5314 / ATCC MYA-2876) (Yeast).